A 217-amino-acid chain; its full sequence is Cytidylate kinase (217 aa).

Gly9–Thr17 serves as a coordination point for ATP.

This sequence belongs to the cytidylate kinase family. Type 1 subfamily.

The protein resides in the cytoplasm. The enzyme catalyses CMP + ATP = CDP + ADP. It catalyses the reaction dCMP + ATP = dCDP + ADP. In Clostridium acetobutylicum (strain ATCC 824 / DSM 792 / JCM 1419 / IAM 19013 / LMG 5710 / NBRC 13948 / NRRL B-527 / VKM B-1787 / 2291 / W), this protein is Cytidylate kinase.